The primary structure comprises 249 residues: Ribonuclease PH (249 aa).

Phosphate contacts are provided by residues arginine 86 and 124-126 (GTR).

It belongs to the RNase PH family. As to quaternary structure, homohexameric ring arranged as a trimer of dimers.

The enzyme catalyses tRNA(n+1) + phosphate = tRNA(n) + a ribonucleoside 5'-diphosphate. Its function is as follows. Phosphorolytic 3'-5' exoribonuclease that plays an important role in tRNA 3'-end maturation. Removes nucleotide residues following the 3'-CCA terminus of tRNAs; can also add nucleotides to the ends of RNA molecules by using nucleoside diphosphates as substrates, but this may not be physiologically important. Probably plays a role in initiation of 16S rRNA degradation (leading to ribosome degradation) during starvation. This is Ribonuclease PH from Clostridium botulinum (strain Alaska E43 / Type E3).